A 209-amino-acid polypeptide reads, in one-letter code: Guanylate kinase (209 aa).

The Guanylate kinase-like domain maps to G8–R186. A15 to T22 lines the ATP pocket.

This sequence belongs to the guanylate kinase family.

Its subcellular location is the cytoplasm. It carries out the reaction GMP + ATP = GDP + ADP. In terms of biological role, essential for recycling GMP and indirectly, cGMP. The chain is Guanylate kinase from Thiobacillus denitrificans (strain ATCC 25259 / T1).